The following is a 496-amino-acid chain: Glutamyl-tRNA(Gln) amidotransferase subunit A (496 aa).

Residues Lys75 and Ser150 each act as charge relay system in the active site. Ser174 (acyl-ester intermediate) is an active-site residue.

It belongs to the amidase family. GatA subfamily. Heterotrimer of A, B and C subunits.

The enzyme catalyses L-glutamyl-tRNA(Gln) + L-glutamine + ATP + H2O = L-glutaminyl-tRNA(Gln) + L-glutamate + ADP + phosphate + H(+). Functionally, allows the formation of correctly charged Gln-tRNA(Gln) through the transamidation of misacylated Glu-tRNA(Gln) in organisms which lack glutaminyl-tRNA synthetase. The reaction takes place in the presence of glutamine and ATP through an activated gamma-phospho-Glu-tRNA(Gln). This chain is Glutamyl-tRNA(Gln) amidotransferase subunit A, found in Burkholderia mallei (strain NCTC 10247).